The following is a 211-amino-acid chain: Imidazole glycerol phosphate synthase subunit HisH (211 aa).

A Glutamine amidotransferase type-1 domain is found at 4–211; sequence TVALLDYGSG…QLLRNWINHI (208 aa). The Nucleophile role is filled by Cys-82. Catalysis depends on residues His-192 and Glu-194.

Heterodimer of HisH and HisF.

The protein localises to the cytoplasm. It carries out the reaction 5-[(5-phospho-1-deoxy-D-ribulos-1-ylimino)methylamino]-1-(5-phospho-beta-D-ribosyl)imidazole-4-carboxamide + L-glutamine = D-erythro-1-(imidazol-4-yl)glycerol 3-phosphate + 5-amino-1-(5-phospho-beta-D-ribosyl)imidazole-4-carboxamide + L-glutamate + H(+). The catalysed reaction is L-glutamine + H2O = L-glutamate + NH4(+). It participates in amino-acid biosynthesis; L-histidine biosynthesis; L-histidine from 5-phospho-alpha-D-ribose 1-diphosphate: step 5/9. In terms of biological role, IGPS catalyzes the conversion of PRFAR and glutamine to IGP, AICAR and glutamate. The HisH subunit catalyzes the hydrolysis of glutamine to glutamate and ammonia as part of the synthesis of IGP and AICAR. The resulting ammonia molecule is channeled to the active site of HisF. This Corynebacterium efficiens (strain DSM 44549 / YS-314 / AJ 12310 / JCM 11189 / NBRC 100395) protein is Imidazole glycerol phosphate synthase subunit HisH.